An 86-amino-acid polypeptide reads, in one-letter code: Large ribosomal subunit protein uL23 (86 aa).

Belongs to the universal ribosomal protein uL23 family. In terms of assembly, part of the 50S ribosomal subunit. Contacts protein L29.

Functionally, binds to 23S rRNA. One of the proteins that surrounds the polypeptide exit tunnel on the outside of the ribosome. This is Large ribosomal subunit protein uL23 from Methanothermobacter thermautotrophicus (strain ATCC 29096 / DSM 1053 / JCM 10044 / NBRC 100330 / Delta H) (Methanobacterium thermoautotrophicum).